The sequence spans 289 residues: Acetyl-coenzyme A carboxylase carboxyl transferase subunit beta (289 aa).

The CoA carboxyltransferase N-terminal domain occupies 28 to 289 (VMTKCPKCKK…QGGEMAVWQS (262 aa)). Zn(2+) contacts are provided by Cys-32, Cys-35, Cys-51, and Cys-54. Residues 32-54 (CPKCKKIMYTKELLKNLKVCVNC) form a C4-type zinc finger.

This sequence belongs to the AccD/PCCB family. Acetyl-CoA carboxylase is a heterohexamer composed of biotin carboxyl carrier protein (AccB), biotin carboxylase (AccC) and two subunits each of ACCase subunit alpha (AccA) and ACCase subunit beta (AccD). It depends on Zn(2+) as a cofactor.

The protein resides in the cytoplasm. It carries out the reaction N(6)-carboxybiotinyl-L-lysyl-[protein] + acetyl-CoA = N(6)-biotinyl-L-lysyl-[protein] + malonyl-CoA. Its pathway is lipid metabolism; malonyl-CoA biosynthesis; malonyl-CoA from acetyl-CoA: step 1/1. In terms of biological role, component of the acetyl coenzyme A carboxylase (ACC) complex. Biotin carboxylase (BC) catalyzes the carboxylation of biotin on its carrier protein (BCCP) and then the CO(2) group is transferred by the transcarboxylase to acetyl-CoA to form malonyl-CoA. This Bacillus cereus (strain AH187) protein is Acetyl-coenzyme A carboxylase carboxyl transferase subunit beta.